The sequence spans 78 residues: Small ribosomal subunit protein bS16c (78 aa).

It belongs to the bacterial ribosomal protein bS16 family.

The protein resides in the plastid. It is found in the chloroplast. This is Small ribosomal subunit protein bS16c from Gracilaria tenuistipitata var. liui (Red alga).